The sequence spans 95 residues: Large ribosomal subunit protein bL25 (95 aa).

This sequence belongs to the bacterial ribosomal protein bL25 family. Part of the 50S ribosomal subunit; part of the 5S rRNA/L5/L18/L25 subcomplex. Contacts the 5S rRNA. Binds to the 5S rRNA independently of L5 and L18.

Functionally, this is one of the proteins that binds to the 5S RNA in the ribosome where it forms part of the central protuberance. In Shewanella putrefaciens (strain CN-32 / ATCC BAA-453), this protein is Large ribosomal subunit protein bL25.